We begin with the raw amino-acid sequence, 308 residues long: tRNA dimethylallyltransferase (308 aa).

14-21 (GPTASGKT) contributes to the ATP binding site. 16-21 (TASGKT) is a substrate binding site. 3 interaction with substrate tRNA regions span residues 39 to 42 (DSAL), 163 to 167 (QRLAR), and 244 to 249 (RCVGYR).

This sequence belongs to the IPP transferase family. As to quaternary structure, monomer. Requires Mg(2+) as cofactor.

The enzyme catalyses adenosine(37) in tRNA + dimethylallyl diphosphate = N(6)-dimethylallyladenosine(37) in tRNA + diphosphate. In terms of biological role, catalyzes the transfer of a dimethylallyl group onto the adenine at position 37 in tRNAs that read codons beginning with uridine, leading to the formation of N6-(dimethylallyl)adenosine (i(6)A). The polypeptide is tRNA dimethylallyltransferase (Shewanella piezotolerans (strain WP3 / JCM 13877)).